The sequence spans 377 residues: Chaperone protein DnaJ (377 aa).

The region spanning 5–69 (EYYDRLGVSK…QKRAAYDQYG (65 aa)) is the J domain. The CR-type zinc finger occupies 133-215 (GTEKEVHYNR…CHGTGHEKQS (83 aa)). Residues C146, C149, C163, C166, C189, C192, C203, and C206 each coordinate Zn(2+). CXXCXGXG motif repeat units follow at residues 146 to 153 (CHTCNGSG), 163 to 170 (CSKCHGSG), 189 to 196 (CDVCHGTG), and 203 to 210 (CPTCHGTG).

It belongs to the DnaJ family. As to quaternary structure, homodimer. Requires Zn(2+) as cofactor.

Its subcellular location is the cytoplasm. Functionally, participates actively in the response to hyperosmotic and heat shock by preventing the aggregation of stress-denatured proteins and by disaggregating proteins, also in an autonomous, DnaK-independent fashion. Unfolded proteins bind initially to DnaJ; upon interaction with the DnaJ-bound protein, DnaK hydrolyzes its bound ATP, resulting in the formation of a stable complex. GrpE releases ADP from DnaK; ATP binding to DnaK triggers the release of the substrate protein, thus completing the reaction cycle. Several rounds of ATP-dependent interactions between DnaJ, DnaK and GrpE are required for fully efficient folding. Also involved, together with DnaK and GrpE, in the DNA replication of plasmids through activation of initiation proteins. The polypeptide is Chaperone protein DnaJ (Streptococcus mutans serotype c (strain ATCC 700610 / UA159)).